The sequence spans 312 residues: DNA-directed RNA polymerase subunit alpha (312 aa).

The segment at 1–226 (MIEFEKPTIT…EHLGLFTDLT (226 aa)) is alpha N-terminal domain (alpha-NTD). Residues 242–312 (SDDRMLDRTI…DLGLGLKKDK (71 aa)) are alpha C-terminal domain (alpha-CTD).

The protein belongs to the RNA polymerase alpha chain family. In terms of assembly, homodimer. The RNAP catalytic core consists of 2 alpha, 1 beta, 1 beta' and 1 omega subunit. When a sigma factor is associated with the core the holoenzyme is formed, which can initiate transcription.

The enzyme catalyses RNA(n) + a ribonucleoside 5'-triphosphate = RNA(n+1) + diphosphate. Its function is as follows. DNA-dependent RNA polymerase catalyzes the transcription of DNA into RNA using the four ribonucleoside triphosphates as substrates. The sequence is that of DNA-directed RNA polymerase subunit alpha from Streptococcus suis (strain 98HAH33).